The chain runs to 568 residues: Sulfite reductase [NADPH] hemoprotein beta-component (568 aa).

[4Fe-4S] cluster-binding residues include C426, C432, C471, and C475. Position 475 (C475) interacts with siroheme.

Belongs to the nitrite and sulfite reductase 4Fe-4S domain family. Alpha(8)-beta(8). The alpha component is a flavoprotein, the beta component is a hemoprotein. It depends on siroheme as a cofactor. [4Fe-4S] cluster is required as a cofactor.

It carries out the reaction hydrogen sulfide + 3 NADP(+) + 3 H2O = sulfite + 3 NADPH + 4 H(+). The protein operates within sulfur metabolism; hydrogen sulfide biosynthesis; hydrogen sulfide from sulfite (NADPH route): step 1/1. In terms of biological role, component of the sulfite reductase complex that catalyzes the 6-electron reduction of sulfite to sulfide. This is one of several activities required for the biosynthesis of L-cysteine from sulfate. The protein is Sulfite reductase [NADPH] hemoprotein beta-component of Xylella fastidiosa (strain M12).